Reading from the N-terminus, the 300-residue chain is Spermatogenesis-associated serine-rich protein 1 (300 aa).

Residues 1 to 10 (MSPSMLTGNS) are compositionally biased toward polar residues. 2 disordered regions span residues 1 to 42 (MSPS…MTEV) and 64 to 91 (TPSG…LPRV). Over residues 27–42 (QLEKVPEKRDSGMTEV) the composition is skewed to basic and acidic residues. Over residues 64–85 (TPSGKSVSSSSSVETGPSVSEP) the composition is skewed to low complexity. S113 is subject to Phosphoserine.

This Homo sapiens (Human) protein is Spermatogenesis-associated serine-rich protein 1 (SPATS1).